Here is a 301-residue protein sequence, read N- to C-terminus: Tetrapeptide repeat homeobox protein 2 (301 aa).

Disordered stretches follow at residues 1–27 (MQDPGHLQGPPLALDPPRRQRQERTVY) and 273–301 (SLSTTTSQYKEEDGFVDKNHSVPRSLLDL). Composition is skewed to basic and acidic residues over residues 16 to 26 (PPRRQRQERTV) and 281 to 292 (YKEEDGFVDKNH). The segment at residues 20–79 (QRQERTVYTESQQKVLEFYFQKDQYPNYDQRLNLAEMLSLREQQLQVWFKNRRAKLARER) is a DNA-binding region (homeobox).

The protein belongs to the paired homeobox family.

The protein localises to the nucleus. Its function is as follows. Transcription factor expressed after fertilization required for zygotic genome activation (ZGA), a critical event in early embryonic development during which the developmental control passes from maternally provided mRNAs to the expression of the zygotic genome after fertilization. Binds and activates expression of key ZGA marker genes, such as NANOGNB, ZSCAN4, DUXB, KLF5 and DPPA3. Binds to regulatory DNA sequences containing a 5'-TAATCC-3' sequence motif. The protein is Tetrapeptide repeat homeobox protein 2 of Homo sapiens (Human).